We begin with the raw amino-acid sequence, 110 residues long: Parvalbumin alpha (110 aa).

N-acetylserine is present on serine 2. Residues serine 2, serine 8, and serine 24 each carry the phosphoserine modification. 2 consecutive EF-hand domains span residues 39–74 (KNPD…FSSD) and 78–110 (LSAK…VAES). The Ca(2+) site is built by aspartate 52, aspartate 54, serine 56, phenylalanine 58, glutamate 60, glutamate 63, aspartate 91, aspartate 93, aspartate 95, lysine 97, and glutamate 102.

In terms of tissue distribution, expressed in the modiolar nerve root (at protein level).

In muscle, parvalbumin is thought to be involved in relaxation after contraction. It binds two calcium ions. In Mus musculus (Mouse), this protein is Parvalbumin alpha (Pvalb).